A 230-amino-acid chain; its full sequence is Demethylmenaquinone methyltransferase (230 aa).

S-adenosyl-L-methionine contacts are provided by residues threonine 62, aspartate 80, 100-101, and serine 117; that span reads DG.

The protein belongs to the class I-like SAM-binding methyltransferase superfamily. MenG/UbiE family.

The catalysed reaction is a 2-demethylmenaquinol + S-adenosyl-L-methionine = a menaquinol + S-adenosyl-L-homocysteine + H(+). Its pathway is quinol/quinone metabolism; menaquinone biosynthesis; menaquinol from 1,4-dihydroxy-2-naphthoate: step 2/2. Its function is as follows. Methyltransferase required for the conversion of demethylmenaquinol (DMKH2) to menaquinol (MKH2). This chain is Demethylmenaquinone methyltransferase, found in Corynebacterium glutamicum (strain R).